The primary structure comprises 364 residues: tRNA N6-adenosine threonylcarbamoyltransferase (364 aa).

Fe cation contacts are provided by His-115 and His-119. Substrate contacts are provided by residues 137–141, Asp-170, Gly-183, and Asn-288; that span reads LVSGG. Asp-316 contributes to the Fe cation binding site.

This sequence belongs to the KAE1 / TsaD family. Requires Fe(2+) as cofactor.

The protein localises to the cytoplasm. The catalysed reaction is L-threonylcarbamoyladenylate + adenosine(37) in tRNA = N(6)-L-threonylcarbamoyladenosine(37) in tRNA + AMP + H(+). Required for the formation of a threonylcarbamoyl group on adenosine at position 37 (t(6)A37) in tRNAs that read codons beginning with adenine. Is involved in the transfer of the threonylcarbamoyl moiety of threonylcarbamoyl-AMP (TC-AMP) to the N6 group of A37, together with TsaE and TsaB. TsaD likely plays a direct catalytic role in this reaction. This chain is tRNA N6-adenosine threonylcarbamoyltransferase, found in Bartonella bacilliformis (strain ATCC 35685 / KC583 / Herrer 020/F12,63).